Consider the following 89-residue polypeptide: DNA maturase A (89 aa).

As to quaternary structure, gp18 and gp19 associate with DNA and prohead.

Its function is as follows. During the growth of this phage, DNA is synthesized as concatemers. During DNA packaging mature monomers are cut from the concatemers. The protein is DNA maturase A (18) of Enterobacteria phage T3 (Bacteriophage T3).